The chain runs to 361 residues: Peptide chain release factor 1 (361 aa).

Position 238 is an N5-methylglutamine (Q238).

It belongs to the prokaryotic/mitochondrial release factor family. In terms of processing, methylated by PrmC. Methylation increases the termination efficiency of RF1.

The protein localises to the cytoplasm. Peptide chain release factor 1 directs the termination of translation in response to the peptide chain termination codons UAG and UAA. The sequence is that of Peptide chain release factor 1 from Mesomycoplasma hyopneumoniae (strain 7448) (Mycoplasma hyopneumoniae).